We begin with the raw amino-acid sequence, 1397 residues long: DNA-directed RNA polymerase subunit beta' (1397 aa).

The Zn(2+) site is built by Cys75, Cys77, Cys90, and Cys93. 3 residues coordinate Mg(2+): Asp465, Asp467, and Asp469. Zn(2+)-binding residues include Cys819, Cys893, Cys900, and Cys903.

This sequence belongs to the RNA polymerase beta' chain family. In terms of assembly, the RNAP catalytic core consists of 2 alpha, 1 beta, 1 beta' and 1 omega subunit. When a sigma factor is associated with the core the holoenzyme is formed, which can initiate transcription. Mg(2+) is required as a cofactor. Zn(2+) serves as cofactor.

It carries out the reaction RNA(n) + a ribonucleoside 5'-triphosphate = RNA(n+1) + diphosphate. In terms of biological role, DNA-dependent RNA polymerase catalyzes the transcription of DNA into RNA using the four ribonucleoside triphosphates as substrates. This Acinetobacter baumannii (strain SDF) protein is DNA-directed RNA polymerase subunit beta'.